A 1089-amino-acid chain; its full sequence is SUMO-specific isopeptidase USPL1 (1089 aa).

A disordered region spans residues 90–128 (LISPDSEDCPTPSKPQKRKRLETNCRNSPLPVHSKKTRS). The 274-residue stretch at 215 to 488 (VQWKNTQALC…ETHIVIWERK (274 aa)) folds into the USP domain. Residue Cys-224 is the Nucleophile of the active site. Residues 224 to 483 (CWLDCILSAL…EVPASETHIV (260 aa)) form an SUMO-binding region. Catalysis depends on His-444, which acts as the Proton acceptor. Disordered regions lie at residues 687–739 (DSQT…KEDQ), 791–817 (ISRR…SPPL), 835–868 (LREQ…AAED), and 891–928 (LISS…CGSP). The span at 719-733 (TASSKTVAARSAQNQ) shows a compositional bias: polar residues. Residues 791–803 (ISRRSKRMSRKAK) show a composition bias toward basic residues. Residue Ser-894 is modified to Phosphoserine. The segment covering 895 to 907 (PHREPSLSDHSEP) has biased composition (basic and acidic residues).

The protein belongs to the peptidase C19 family. In terms of assembly, interacts with ELL.

It localises to the nucleus. Its subcellular location is the cajal body. Functionally, SUMO-specific isopeptidase involved in protein desumoylation. Specifically binds SUMO proteins with a higher affinity for SUMO2 and SUMO3 which it cleaves more efficiently. Also able to process full-length SUMO proteins to their mature forms. Plays a key role in RNA polymerase-II-mediated snRNA transcription in the Cajal bodies. Is a component of complexes that can bind to U snRNA genes. In Mus musculus (Mouse), this protein is SUMO-specific isopeptidase USPL1 (Uspl1).